A 567-amino-acid polypeptide reads, in one-letter code: Thiol:disulfide interchange protein DsbD (567 aa).

The first 19 residues, 1 to 19 (MAQRIFTLILLLCSTSAFA), serve as a signal peptide directing secretion. 2 disulfide bridges follow: Cys122-Cys128 and Cys185-Cys307. 8 helical membrane-spanning segments follow: residues 166–186 (LPFSALWALLIGIGIAFTPCV), 211–231 (LLAFIYVQGMALTYTALGLVV), 246–266 (YVLIGLAIVFTLLALSMFGLF), 299–319 (IAGLICSPCTTAPLSAILLYI), 326–346 (WLGGGTLYLYALGMGLPLMLV), 360–380 (WMAHVKTAFGFVILALPVFLL), 387–407 (AWGLRLWSLLGVAFFGWAFIT), and 418–438 (IVQIILLAAALISVRPLQDWA). Residues 435-567 (QDWAFGSPSA…FSAHLHDRQP (133 aa)) enclose the Thioredoxin domain. The cysteines at positions 482 and 485 are disulfide-linked.

This sequence belongs to the thioredoxin family. DsbD subfamily.

Its subcellular location is the cell inner membrane. The enzyme catalyses [protein]-dithiol + NAD(+) = [protein]-disulfide + NADH + H(+). The catalysed reaction is [protein]-dithiol + NADP(+) = [protein]-disulfide + NADPH + H(+). Required to facilitate the formation of correct disulfide bonds in some periplasmic proteins and for the assembly of the periplasmic c-type cytochromes. Acts by transferring electrons from cytoplasmic thioredoxin to the periplasm. This transfer involves a cascade of disulfide bond formation and reduction steps. The sequence is that of Thiol:disulfide interchange protein DsbD from Salmonella paratyphi A (strain ATCC 9150 / SARB42).